The following is a 376-amino-acid chain: Beta-centractin (376 aa).

Met-1 carries the N-acetylmethionine modification. Tyr-4 is modified (3'-nitrotyrosine).

This sequence belongs to the actin family. ARP1 subfamily.

It localises to the cytoplasm. The protein localises to the cytoskeleton. The protein resides in the microtubule organizing center. Its subcellular location is the centrosome. Functionally, component of a multi-subunit complex involved in microtubule based vesicle motility. It is associated with the centrosome. The polypeptide is Beta-centractin (ACTR1B) (Bos taurus (Bovine)).